The primary structure comprises 139 residues: Ribulose bisphosphate carboxylase small subunit (139 aa).

It belongs to the RuBisCO small chain family. As to quaternary structure, heterohexadecamer of 8 large and 8 small subunits.

It localises to the plastid. The protein localises to the chloroplast. Its function is as follows. RuBisCO catalyzes two reactions: the carboxylation of D-ribulose 1,5-bisphosphate, the primary event in carbon dioxide fixation, as well as the oxidative fragmentation of the pentose substrate in the photorespiration process. Both reactions occur simultaneously and in competition at the same active site. Although the small subunit is not catalytic it is essential for maximal activity. The chain is Ribulose bisphosphate carboxylase small subunit from Pylaiella littoralis (Seaweed).